The primary structure comprises 391 residues: S-adenosylmethionine synthase (391 aa).

His14 provides a ligand contact to ATP. A Mg(2+)-binding site is contributed by Asp16. Glu42 lines the K(+) pocket. Positions 55 and 98 each coordinate L-methionine. Residues 98 to 108 form a flexible loop region; it reads QSPDIAMGVDE. ATP is bound by residues 172-174, 238-239, Asp247, 253-254, Ala270, and Lys274; these read DGK, RF, and RK. Asp247 contacts L-methionine. Lys278 is a binding site for L-methionine.

This sequence belongs to the AdoMet synthase family. In terms of assembly, homotetramer; dimer of dimers. The cofactor is Mg(2+). It depends on K(+) as a cofactor.

It localises to the cytoplasm. The catalysed reaction is L-methionine + ATP + H2O = S-adenosyl-L-methionine + phosphate + diphosphate. It participates in amino-acid biosynthesis; S-adenosyl-L-methionine biosynthesis; S-adenosyl-L-methionine from L-methionine: step 1/1. Catalyzes the formation of S-adenosylmethionine (AdoMet) from methionine and ATP. The overall synthetic reaction is composed of two sequential steps, AdoMet formation and the subsequent tripolyphosphate hydrolysis which occurs prior to release of AdoMet from the enzyme. The polypeptide is S-adenosylmethionine synthase (Clostridium tetani (strain Massachusetts / E88)).